Reading from the N-terminus, the 489-residue chain is MALKLYNSLTRQEETFEPLEPNIIKMYVCGVTVYDYCHLGHARSYIAWDTMRRYLIWQGYQVRYVQNFTDIDDKILKRARETGSSMDSVAKRFTEAYFEDMKRLNVLEADEYPRATQNIDRIQNLIHDLEKKGFAYSSGGDVYYQVREFSQYGKLSGRRLEEMQAGASGRVDSEDLETAKKKDPFDFALWKAAKTGEPAWDSPWGKGRPGWHIECSAMVQDCLGETIDIHAGGADLIFPHHENEIAQSEASTGKILARYWLHNGFVTINGEKMSKSLGNFTTIRDLLDQPVDPMALRMFVLTAQYRKPIDFTEEAIASAKNGWNTIKEGILFPYQYGPKLGWEMPAKNLSDQTLLLTSYLEKFQKAMDDDINTPAALAILFELAKDLRREGNVLIHEGKTETSLEELKKQWVTLVSLSQVLGLEVKIEEQVSNISEGLSNIEIESLIQQRLEAKKAKNYSEADRIRNELQSQGIKLIDKSGGLTNWHRN.

C29 provides a ligand contact to Zn(2+). The short motif at 31–41 (VTVYDYCHLGH) is the 'HIGH' region element. Residues C215, H240, and E244 each contribute to the Zn(2+) site. Positions 272-276 (KMSKS) match the 'KMSKS' region motif. Residue K275 coordinates ATP.

Belongs to the class-I aminoacyl-tRNA synthetase family. In terms of assembly, monomer. Zn(2+) serves as cofactor.

The protein localises to the cytoplasm. The catalysed reaction is tRNA(Cys) + L-cysteine + ATP = L-cysteinyl-tRNA(Cys) + AMP + diphosphate. This Trichodesmium erythraeum (strain IMS101) protein is Cysteine--tRNA ligase.